We begin with the raw amino-acid sequence, 603 residues long: Beta-hexosaminidase (603 aa).

A signal peptide spans 1–19 (MAYFRLYAVLLAVASSVAA). Residues aspartate 225, histidine 278, and glutamate 349 each act as charge relay system in the active site. Cysteine 293 and cysteine 354 are disulfide-bonded. Residue asparagine 356 is glycosylated (N-linked (GlcNAc...) asparagine). A disulfide bond links cysteine 451 and cysteine 486. N-linked (GlcNAc...) asparagine glycans are attached at residues asparagine 503 and asparagine 528. The cysteines at positions 586 and 593 are disulfide-linked.

Belongs to the glycosyl hydrolase 20 family. Homodimer.

It is found in the secreted. The enzyme catalyses Hydrolysis of terminal non-reducing N-acetyl-D-hexosamine residues in N-acetyl-beta-D-hexosaminides.. Its function is as follows. Part of the binary chitinolytic system. Involved in hydrolysis of chitobiose and higher chito-oligomers (produced from cell wall chitin by endochitinases), thus contributing to the formation of germ tubes, fruit-bodies and septa during hyphenation. Hydrolyzes synthetic substrates p-nitrophenyl-beta-N-acetyl-glucosamine (pNP-beta-GlcNAc), p-nitrophenyl-beta-N-acetyl-galactosamine (pNP-beta-GalNAc) and 5-bromo-4-chloro-3-indoyl-beta-D-N-glucosaminide (X-GlcNAc). The protein is Beta-hexosaminidase of Emericella nidulans (Aspergillus nidulans).